The primary structure comprises 286 residues: Prohibitin-6, mitochondrial (286 aa).

At 1–12 (MNFKNVKVPKGP) the chain is on the mitochondrial matrix side. The chain crosses the membrane as a helical; Signal-anchor for type II membrane protein span at residues 13 to 35 (GGGVIAAVVIGGLSLYGATHTLY). Over 36–286 (NVDGGHRAIV…AMDLDVKPKK (251 aa)) the chain is Mitochondrial intermembrane.

It belongs to the prohibitin family. Component of a prohibitin multimeric complex in mitochondrial membranes. Mostly expressed in proliferative tissues, including vasculature, shoot and root apical tissues.

The protein resides in the mitochondrion inner membrane. Prohibitin probably acts as a holdase/unfoldase for the stabilization of newly synthesized mitochondrial proteins. In Arabidopsis thaliana (Mouse-ear cress), this protein is Prohibitin-6, mitochondrial (PHB6).